A 422-amino-acid polypeptide reads, in one-letter code: Replication factor C large subunit (422 aa).

Residue 63–70 (GPPGVGKT) coordinates ATP.

It belongs to the activator 1 small subunits family. RfcL subfamily. As to quaternary structure, heteromultimer composed of small subunits (RfcS) and large subunits (RfcL).

Part of the RFC clamp loader complex which loads the PCNA sliding clamp onto DNA. This Pyrobaculum aerophilum (strain ATCC 51768 / DSM 7523 / JCM 9630 / CIP 104966 / NBRC 100827 / IM2) protein is Replication factor C large subunit.